A 470-amino-acid chain; its full sequence is Aromatic amino acid aminotransferase C569.07 (470 aa).

It belongs to the class-I pyridoxal-phosphate-dependent aminotransferase family. The cofactor is pyridoxal 5'-phosphate.

The protein resides in the cytoplasm. The enzyme catalyses an aromatic L-alpha-amino acid + 2-oxoglutarate = an aromatic oxo-acid + L-glutamate. Has aromatic amino acid transaminase activity. In Schizosaccharomyces pombe (strain 972 / ATCC 24843) (Fission yeast), this protein is Aromatic amino acid aminotransferase C569.07.